Here is a 300-residue protein sequence, read N- to C-terminus: Tyrosine phosphatase-like protein J1 (300 aa).

Residues 27-294 (LKREHEHIMQ…IFCYFTVLQF (268 aa)) form the Tyrosine-protein phosphatase domain.

It belongs to the protein-tyrosine phosphatase family.

In Microplitis demolitor (Parasitoid wasp), this protein is Tyrosine phosphatase-like protein J1 (J1).